Here is a 391-residue protein sequence, read N- to C-terminus: MPGNSLGKMFRITTFGESHGPMIGVIVDGVPAGLYISKEDIEFELSFRRPGKQFVSGRREKDEPEIVSGVYNGRTTGAPLTIIIRNNDVISSLYEEVKHKPRPGHADLPYIMKYGYENWDYRGGGRSSARETASRVAASAIAKKLLMLTDTVIGAHLKSLGPVELDEDVSFREIFCSKYSPVRASKKWLEEKYEELIKQATVEGDSWGGVAEVIADNVPIGLGEPVFDKLKSDLAKALLSIPAVVGFEYGLGFKASKMKGSEANDEIVIKDNGKLGWRYNKAGGILGGLSNGEKLVLRCAFKPTSSIRKPQKTVDLRTSEESTIRVIGRHDPAVAIRGVSVAEAMVALVLVDHALRSGYIPPVKLSEDQARIIEEKWRRYVEECKPMQESQ.

NADP(+) is bound at residue R48. FMN is bound by residues 126 to 128, G287, 302 to 306, and R329; these read RSS and KPTSS.

The protein belongs to the chorismate synthase family. It depends on FMNH2 as a cofactor.

The catalysed reaction is 5-O-(1-carboxyvinyl)-3-phosphoshikimate = chorismate + phosphate. The protein operates within metabolic intermediate biosynthesis; chorismate biosynthesis; chorismate from D-erythrose 4-phosphate and phosphoenolpyruvate: step 7/7. Functionally, catalyzes the anti-1,4-elimination of the C-3 phosphate and the C-6 proR hydrogen from 5-enolpyruvylshikimate-3-phosphate (EPSP) to yield chorismate, which is the branch point compound that serves as the starting substrate for the three terminal pathways of aromatic amino acid biosynthesis. This reaction introduces a second double bond into the aromatic ring system. This is Chorismate synthase from Sulfolobus acidocaldarius (strain ATCC 33909 / DSM 639 / JCM 8929 / NBRC 15157 / NCIMB 11770).